Reading from the N-terminus, the 250-residue chain is Sperm-egg fusion protein Juno (250 aa).

The N-terminal stretch at 1–19 is a signal peptide; sequence MACWWPLLLELWTVMPTWA. 8 disulfides stabilise this stretch: C27-C55, C47-C95, C56-C99, C79-C172, C86-C143, C132-C206, C136-C186, and C149-C166. The tract at residues 62-81 is important for interaction with IZUMO1; that stretch reads WEAHLDVSPLYNFSLFHCGL. N73 carries an N-linked (GlcNAc...) asparagine glycan. S228 carries the GPI-anchor amidated serine lipid modification. A propeptide spanning residues 229-250 is cleaved from the precursor; it reads SAPSWELSYTIMVCSLFLPFLS.

This sequence belongs to the folate receptor family. In terms of assembly, monomer. Interacts with IZUMO1; the interaction is direct. IZUMO1 and IZUMO1R/JUNO form a complex with 1:1 stoichiometry. Interacts with FCRL3/MAIA; FCRL3/MAIA replaces IZUMO1R/JUNO as IZUMO1 receptor after sperm-egg adhesion, thereby permitting species-specific gamete fusion. Interacts with WDR54. In terms of processing, the protein is rapidly cleaved following fertilization, being only weakly detectable in zona-intact fertilized eggs at telophase II and undetectable at the pronuclear stage. Sheding is probably required to block to polyspermy and ensuring egg fusion with a single sperm. As to expression, expressed in unfertilized oocytes (at protein level).

The protein localises to the cell membrane. It is found in the cell projection. The protein resides in the microvillus membrane. Functionally, receptor for IZUMO1 present at the cell surface of oocytes (oolemma), which is essential for species-specific gamete recognition and fertilization. The IZUMO1:IZUMO1R/JUNO interaction is a necessary adhesion event between sperm and egg that is required for fertilization but is not sufficient for cell fusion. The ligand-receptor interaction probably does not act as a membrane 'fusogen'. Does not bind folate. The sequence is that of Sperm-egg fusion protein Juno from Homo sapiens (Human).